We begin with the raw amino-acid sequence, 319 residues long: sn-1-specific diacylglycerol lipase ABHD11 (319 aa).

A mitochondrion-targeting transit peptide spans 1–28 (MTLKLAVLRQIFQGSKGWHLWQHWRAFY). The AB hydrolase-1 domain maps to 69–304 (PPLVLLHGLF…GAGHWVHADK (236 aa)). Residues S143, E239, and H298 each act as charge relay system in the active site.

Belongs to the AB hydrolase superfamily. Phosphorylated.

The protein resides in the mitochondrion. It is found in the mitochondrion matrix. The enzyme catalyses 1-octadecanoyl-2-(5Z,8Z,11Z,14Z-eicosatetraenoyl)-sn-glycerol + H2O = 2-(5Z,8Z,11Z,14Z-eicosatetraenoyl)-glycerol + octadecanoate + H(+). It carries out the reaction a 1,2-diacyl-sn-glycerol + H2O = a 2-acylglycerol + a fatty acid + H(+). The catalysed reaction is a 1,3-diacyl-sn-glycerol + H2O = a 1-acyl-sn-glycerol + a fatty acid + H(+). It catalyses the reaction 1-octadecanoyl-2-(9Z-octadecenoyl)-sn-glycerol + H2O = 2-(9Z-octadecenoyl)-glycerol + octadecanoate + H(+). The enzyme catalyses 1-octadecanoyl-2-(4Z,7Z,10Z,13Z,16Z,19Z-docosahexaenoyl)-sn-glycerol + H2O = 2-(4Z,7Z,10Z,13Z,16Z,19Z-docosahexaenoyl)-glycerol + octadecanoate + H(+). It carries out the reaction 1,2-didecanoylglycerol + H2O = decanoylglycerol + decanoate + H(+). Functionally, catalyzes the hydrolysis of diacylglycerol in vitro and may function as a key regulator in lipid metabolism, namely by regulating the intracellular levels of diacylglycerol. 1,2-diacyl-sn-glycerols are the preferred substrate over 1,3-diacyl-sn-glycerols. The enzyme hydrolyzes stearate in preference to palmitate from the sn-1 position of 1,2-diacyl-sn-glycerols. This chain is sn-1-specific diacylglycerol lipase ABHD11, found in Xenopus tropicalis (Western clawed frog).